Reading from the N-terminus, the 198-residue chain is Ribonuclease HII (198 aa).

Positions 6 to 198 constitute an RNase H type-2 domain; sequence EQIAGVDEVG…APCQASLLPD (193 aa). The a divalent metal cation site is built by Asp-12, Glu-13, and Asp-108.

This sequence belongs to the RNase HII family. Mn(2+) is required as a cofactor. It depends on Mg(2+) as a cofactor.

Its subcellular location is the cytoplasm. The enzyme catalyses Endonucleolytic cleavage to 5'-phosphomonoester.. Functionally, endonuclease that specifically degrades the RNA of RNA-DNA hybrids. The polypeptide is Ribonuclease HII (Acaryochloris marina (strain MBIC 11017)).